A 326-amino-acid chain; its full sequence is MTISTLSSSYGNAQDVPAEDSDRHGSIEPGSEKAANAVERSGIPILEVKNLCHRYPHLDANTLEEINLKVYKGERVAVLGANGAGKSTLFKHLNGILKPLSGEVLVKGEKITKKNVRMCRETVGIVFQDPDDQVLAPSVEEDIAFGPINMGLSSEEVEKRVKEALKMVGLEGFEERAPHHLSGGQKKLVAIAGILAMRPEVIVLDEPTAGLDPLSSARFLELIMKMNKELGITLLLSTHDVDVVPYFAERVFVLHHGKLEADGIPEEIFSDPELLRKAHLRLPRIAEIFEMLQQEGVDINIKITAEKARDEILRVMDSRFQTFRMG.

Over residues 1–12 (MTISTLSSSYGN) the composition is skewed to polar residues. A disordered region spans residues 1–34 (MTISTLSSSYGNAQDVPAEDSDRHGSIEPGSEKA). The ABC transporter domain occupies 46 to 281 (LEVKNLCHRY…PELLRKAHLR (236 aa)). 80 to 87 (GANGAGKS) is a binding site for ATP.

The protein belongs to the ABC transporter superfamily.

It localises to the cell membrane. Its function is as follows. Probably part of an ABC transporter complex. Responsible for energy coupling to the transport system. The chain is Putative ABC transporter ATP-binding protein MA_4020 from Methanosarcina acetivorans (strain ATCC 35395 / DSM 2834 / JCM 12185 / C2A).